The primary structure comprises 235 residues: MATPSSATSLNVENIVFPSSVKPPGDTNTLFLGGAGVRGMEIQGNFVKFTGIGVYLEDKAIPLLAGKWKGKTAEELVNSVEFFRDIVTGPFKKFTQVTMILPLTGKQYSEKVSEMCVGVWKAHGTYTDADGATIDKFLEVFKDENFPPGASILFTTSPDGSLTISFSKDGMIPEAANIVLENEKLAQAVIESVIGKNGVSPATKQSLASRLSDLMNHFDEKATTDAEPNLSKNGL.

Thr-50 and Ser-192 together coordinate substrate.

Belongs to the chalcone isomerase family.

It carries out the reaction a chalcone = a flavanone.. Its pathway is secondary metabolite biosynthesis; flavonoid biosynthesis. Catalyzes the intramolecular cyclization of bicyclic chalcones into tricyclic (S)-flavanones. Responsible for the isomerization of 4,2',4',6'-tetrahydroxychalcone (also termed chalcone) into naringenin. The sequence is that of Chalcone--flavanone isomerase 2 (CHI2) from Chrysanthemum morifolium (Florist's daisy).